Consider the following 247-residue polypeptide: 1-(5-phosphoribosyl)-5-[(5-phosphoribosylamino)methylideneamino] imidazole-4-carboxamide isomerase (247 aa).

Asp8 acts as the Proton acceptor in catalysis. Asp129 functions as the Proton donor in the catalytic mechanism.

This sequence belongs to the HisA/HisF family.

It is found in the cytoplasm. The enzyme catalyses 1-(5-phospho-beta-D-ribosyl)-5-[(5-phospho-beta-D-ribosylamino)methylideneamino]imidazole-4-carboxamide = 5-[(5-phospho-1-deoxy-D-ribulos-1-ylimino)methylamino]-1-(5-phospho-beta-D-ribosyl)imidazole-4-carboxamide. It participates in amino-acid biosynthesis; L-histidine biosynthesis; L-histidine from 5-phospho-alpha-D-ribose 1-diphosphate: step 4/9. This Solidesulfovibrio magneticus (strain ATCC 700980 / DSM 13731 / RS-1) (Desulfovibrio magneticus) protein is 1-(5-phosphoribosyl)-5-[(5-phosphoribosylamino)methylideneamino] imidazole-4-carboxamide isomerase.